The chain runs to 248 residues: Probable transcriptional regulatory protein Smed_2641 (248 aa).

Belongs to the TACO1 family.

The protein resides in the cytoplasm. In Sinorhizobium medicae (strain WSM419) (Ensifer medicae), this protein is Probable transcriptional regulatory protein Smed_2641.